Consider the following 201-residue polypeptide: Dephospho-CoA kinase (201 aa).

The DPCK domain maps to 2 to 201 (MIGLTGGIAS…KRWKVIPEDQ (200 aa)). Position 10–15 (10–15 (ASGKSS)) interacts with ATP.

It belongs to the CoaE family.

The protein localises to the cytoplasm. It catalyses the reaction 3'-dephospho-CoA + ATP = ADP + CoA + H(+). It participates in cofactor biosynthesis; coenzyme A biosynthesis; CoA from (R)-pantothenate: step 5/5. In terms of biological role, catalyzes the phosphorylation of the 3'-hydroxyl group of dephosphocoenzyme A to form coenzyme A. The protein is Dephospho-CoA kinase of Halalkalibacterium halodurans (strain ATCC BAA-125 / DSM 18197 / FERM 7344 / JCM 9153 / C-125) (Bacillus halodurans).